The chain runs to 212 residues: Uridine kinase (212 aa).

13–20 (GASASGKS) serves as a coordination point for ATP.

Belongs to the uridine kinase family.

It localises to the cytoplasm. It catalyses the reaction uridine + ATP = UMP + ADP + H(+). The catalysed reaction is cytidine + ATP = CMP + ADP + H(+). The protein operates within pyrimidine metabolism; CTP biosynthesis via salvage pathway; CTP from cytidine: step 1/3. Its pathway is pyrimidine metabolism; UMP biosynthesis via salvage pathway; UMP from uridine: step 1/1. The polypeptide is Uridine kinase (Shewanella halifaxensis (strain HAW-EB4)).